The chain runs to 332 residues: 4-hydroxythreonine-4-phosphate dehydrogenase (332 aa).

Substrate-binding residues include His136 and Thr137. His166, His211, and His266 together coordinate a divalent metal cation. Substrate is bound by residues Lys274, Asn283, and Arg292.

This sequence belongs to the PdxA family. In terms of assembly, homodimer. Zn(2+) is required as a cofactor. Requires Mg(2+) as cofactor. It depends on Co(2+) as a cofactor.

It is found in the cytoplasm. The catalysed reaction is 4-(phosphooxy)-L-threonine + NAD(+) = 3-amino-2-oxopropyl phosphate + CO2 + NADH. It participates in cofactor biosynthesis; pyridoxine 5'-phosphate biosynthesis; pyridoxine 5'-phosphate from D-erythrose 4-phosphate: step 4/5. In terms of biological role, catalyzes the NAD(P)-dependent oxidation of 4-(phosphooxy)-L-threonine (HTP) into 2-amino-3-oxo-4-(phosphooxy)butyric acid which spontaneously decarboxylates to form 3-amino-2-oxopropyl phosphate (AHAP). The protein is 4-hydroxythreonine-4-phosphate dehydrogenase of Wigglesworthia glossinidia brevipalpis.